Here is a 431-residue protein sequence, read N- to C-terminus: Enolase (431 aa).

Q167 is a binding site for (2R)-2-phosphoglycerate. The Proton donor role is filled by E209. The Mg(2+) site is built by D246, E290, and D317. (2R)-2-phosphoglycerate-binding residues include K342, R371, S372, and K393. K342 acts as the Proton acceptor in catalysis.

The protein belongs to the enolase family. In terms of assembly, component of the RNA degradosome, a multiprotein complex involved in RNA processing and mRNA degradation. The cofactor is Mg(2+).

The protein resides in the cytoplasm. It is found in the secreted. Its subcellular location is the cell surface. The catalysed reaction is (2R)-2-phosphoglycerate = phosphoenolpyruvate + H2O. It participates in carbohydrate degradation; glycolysis; pyruvate from D-glyceraldehyde 3-phosphate: step 4/5. Its function is as follows. Catalyzes the reversible conversion of 2-phosphoglycerate (2-PG) into phosphoenolpyruvate (PEP). It is essential for the degradation of carbohydrates via glycolysis. This chain is Enolase, found in Pectobacterium atrosepticum (strain SCRI 1043 / ATCC BAA-672) (Erwinia carotovora subsp. atroseptica).